Reading from the N-terminus, the 380-residue chain is L-lactate dehydrogenase (380 aa).

Residues Met1–Arg380 form the FMN hydroxy acid dehydrogenase domain. Position 24 (Tyr24) interacts with substrate. Residues Ser106 and Gln127 each coordinate FMN. Tyr129 is a substrate binding site. Position 155 (Thr155) interacts with FMN. Position 164 (Arg164) interacts with substrate. Lys251 lines the FMN pocket. The Proton acceptor role is filled by His275. Arg278 serves as a coordination point for substrate. An FMN-binding site is contributed by Asp306–Arg330.

It belongs to the FMN-dependent alpha-hydroxy acid dehydrogenase family. FMN serves as cofactor.

The protein localises to the cell inner membrane. It carries out the reaction (S)-lactate + A = pyruvate + AH2. Its function is as follows. Catalyzes the conversion of L-lactate to pyruvate. Is coupled to the respiratory chain. The polypeptide is L-lactate dehydrogenase (Serratia proteamaculans (strain 568)).